The sequence spans 343 residues: Ribosomal RNA small subunit methyltransferase C (343 aa).

Belongs to the methyltransferase superfamily. RsmC family. In terms of assembly, monomer.

Its subcellular location is the cytoplasm. The enzyme catalyses guanosine(1207) in 16S rRNA + S-adenosyl-L-methionine = N(2)-methylguanosine(1207) in 16S rRNA + S-adenosyl-L-homocysteine + H(+). In terms of biological role, specifically methylates the guanine in position 1207 of 16S rRNA in the 30S particle. The chain is Ribosomal RNA small subunit methyltransferase C from Escherichia coli O6:H1 (strain CFT073 / ATCC 700928 / UPEC).